Reading from the N-terminus, the 270-residue chain is tRNA pseudouridine synthase A (270 aa).

Asp-60 acts as the Nucleophile in catalysis. Tyr-118 lines the substrate pocket.

The protein belongs to the tRNA pseudouridine synthase TruA family. In terms of assembly, homodimer.

The catalysed reaction is uridine(38/39/40) in tRNA = pseudouridine(38/39/40) in tRNA. Its function is as follows. Formation of pseudouridine at positions 38, 39 and 40 in the anticodon stem and loop of transfer RNAs. This chain is tRNA pseudouridine synthase A, found in Salmonella arizonae (strain ATCC BAA-731 / CDC346-86 / RSK2980).